Reading from the N-terminus, the 159-residue chain is 2-C-methyl-D-erythritol 2,4-cyclodiphosphate synthase (159 aa).

Residues Asp-8 and His-10 each contribute to the a divalent metal cation site. Residues 8–10 (DVH) and 34–35 (HS) each bind 4-CDP-2-C-methyl-D-erythritol 2-phosphate. His-42 is a binding site for a divalent metal cation. Residues 56–58 (DIG), 61–65 (FPDTD), 100–106 (AQEPKMA), 132–135 (TTTE), Phe-139, and Arg-142 each bind 4-CDP-2-C-methyl-D-erythritol 2-phosphate.

Belongs to the IspF family. Homotrimer. It depends on a divalent metal cation as a cofactor.

The catalysed reaction is 4-CDP-2-C-methyl-D-erythritol 2-phosphate = 2-C-methyl-D-erythritol 2,4-cyclic diphosphate + CMP. The protein operates within isoprenoid biosynthesis; isopentenyl diphosphate biosynthesis via DXP pathway; isopentenyl diphosphate from 1-deoxy-D-xylulose 5-phosphate: step 4/6. Its function is as follows. Involved in the biosynthesis of isopentenyl diphosphate (IPP) and dimethylallyl diphosphate (DMAPP), two major building blocks of isoprenoid compounds. Catalyzes the conversion of 4-diphosphocytidyl-2-C-methyl-D-erythritol 2-phosphate (CDP-ME2P) to 2-C-methyl-D-erythritol 2,4-cyclodiphosphate (ME-CPP) with a corresponding release of cytidine 5-monophosphate (CMP). This chain is 2-C-methyl-D-erythritol 2,4-cyclodiphosphate synthase, found in Alkaliphilus metalliredigens (strain QYMF).